A 249-amino-acid chain; its full sequence is Cilia- and flagella-associated protein 410 (249 aa).

3 LRR repeats span residues N19 to P40, S41 to R62, and R63 to K84. In terms of domain architecture, LRRCT spans N97–E137. Residues H146 to S203 form a disordered region. Over residues N162–L175 the composition is skewed to polar residues.

As to quaternary structure, found in a complex with CFAP410, NEK1 and SPATA7. Interacts with NEK1. As to expression, expressed in the retina.

It localises to the cell projection. Its subcellular location is the cilium. It is found in the cytoplasm. The protein localises to the cytoskeleton. The protein resides in the cilium basal body. It localises to the mitochondrion. Its subcellular location is the photoreceptor outer segment. Plays a role in cilia formation and/or maintenance. Plays a role in the regulation of cell morphology and cytoskeletal organization. Involved in DNA damage repair. This Mus musculus (Mouse) protein is Cilia- and flagella-associated protein 410.